The following is a 229-amino-acid chain: Carbonic anhydrase 2 (229 aa).

4 residues coordinate Zn(2+): C42, D44, H98, and C101.

It belongs to the beta-class carbonic anhydrase family. The cofactor is Zn(2+).

It catalyses the reaction hydrogencarbonate + H(+) = CO2 + H2O. This is Carbonic anhydrase 2 (can) from Haemophilus influenzae (strain ATCC 51907 / DSM 11121 / KW20 / Rd).